A 262-amino-acid polypeptide reads, in one-letter code: Phosphatidylserine decarboxylase proenzyme (262 aa).

Active-site charge relay system; for autoendoproteolytic cleavage activity residues include Asp-86, His-142, and Ser-226. Ser-226 (schiff-base intermediate with substrate; via pyruvic acid; for decarboxylase activity) is an active-site residue. Pyruvic acid (Ser); by autocatalysis is present on Ser-226.

Belongs to the phosphatidylserine decarboxylase family. PSD-B subfamily. Prokaryotic type I sub-subfamily. Heterodimer of a large membrane-associated beta subunit and a small pyruvoyl-containing alpha subunit. It depends on pyruvate as a cofactor. Is synthesized initially as an inactive proenzyme. Formation of the active enzyme involves a self-maturation process in which the active site pyruvoyl group is generated from an internal serine residue via an autocatalytic post-translational modification. Two non-identical subunits are generated from the proenzyme in this reaction, and the pyruvate is formed at the N-terminus of the alpha chain, which is derived from the carboxyl end of the proenzyme. The autoendoproteolytic cleavage occurs by a canonical serine protease mechanism, in which the side chain hydroxyl group of the serine supplies its oxygen atom to form the C-terminus of the beta chain, while the remainder of the serine residue undergoes an oxidative deamination to produce ammonia and the pyruvoyl prosthetic group on the alpha chain. During this reaction, the Ser that is part of the protease active site of the proenzyme becomes the pyruvoyl prosthetic group, which constitutes an essential element of the active site of the mature decarboxylase.

Its subcellular location is the cell membrane. The enzyme catalyses a 1,2-diacyl-sn-glycero-3-phospho-L-serine + H(+) = a 1,2-diacyl-sn-glycero-3-phosphoethanolamine + CO2. The protein operates within phospholipid metabolism; phosphatidylethanolamine biosynthesis; phosphatidylethanolamine from CDP-diacylglycerol: step 2/2. Its function is as follows. Catalyzes the formation of phosphatidylethanolamine (PtdEtn) from phosphatidylserine (PtdSer). The sequence is that of Phosphatidylserine decarboxylase proenzyme from Bacillus cereus (strain AH820).